The primary structure comprises 522 residues: Peptide chain release factor 3 (522 aa).

The tr-type G domain occupies 10 to 277 (ASRKTFAIIS…TFVDFAPSPS (268 aa)). GTP is bound by residues 19–26 (SHPDAGKT), 87–91 (DTPGH), and 141–144 (NKMD).

Belongs to the TRAFAC class translation factor GTPase superfamily. Classic translation factor GTPase family. PrfC subfamily.

The protein resides in the cytoplasm. Its function is as follows. Increases the formation of ribosomal termination complexes and stimulates activities of RF-1 and RF-2. It binds guanine nucleotides and has strong preference for UGA stop codons. It may interact directly with the ribosome. The stimulation of RF-1 and RF-2 is significantly reduced by GTP and GDP, but not by GMP. The sequence is that of Peptide chain release factor 3 from Listeria innocua serovar 6a (strain ATCC BAA-680 / CLIP 11262).